A 375-amino-acid chain; its full sequence is Queuine tRNA-ribosyltransferase (375 aa).

Residue Asp90 is the Proton acceptor of the active site. Substrate is bound by residues 90-94 (DSGGF), Asp144, Gln190, and Gly217. The tract at residues 248–254 (GIGTPHY) is RNA binding. The Nucleophile role is filled by Asp267. The tract at residues 272–276 (TRIAR) is RNA binding; important for wobble base 34 recognition. Zn(2+)-binding residues include Cys305, Cys307, Cys310, and His336.

Belongs to the queuine tRNA-ribosyltransferase family. Homodimer. Within each dimer, one monomer is responsible for RNA recognition and catalysis, while the other monomer binds to the replacement base PreQ1. Requires Zn(2+) as cofactor.

The catalysed reaction is 7-aminomethyl-7-carbaguanine + guanosine(34) in tRNA = 7-aminomethyl-7-carbaguanosine(34) in tRNA + guanine. Its pathway is tRNA modification; tRNA-queuosine biosynthesis. Functionally, catalyzes the base-exchange of a guanine (G) residue with the queuine precursor 7-aminomethyl-7-deazaguanine (PreQ1) at position 34 (anticodon wobble position) in tRNAs with GU(N) anticodons (tRNA-Asp, -Asn, -His and -Tyr). Catalysis occurs through a double-displacement mechanism. The nucleophile active site attacks the C1' of nucleotide 34 to detach the guanine base from the RNA, forming a covalent enzyme-RNA intermediate. The proton acceptor active site deprotonates the incoming PreQ1, allowing a nucleophilic attack on the C1' of the ribose to form the product. After dissociation, two additional enzymatic reactions on the tRNA convert PreQ1 to queuine (Q), resulting in the hypermodified nucleoside queuosine (7-(((4,5-cis-dihydroxy-2-cyclopenten-1-yl)amino)methyl)-7-deazaguanosine). The protein is Queuine tRNA-ribosyltransferase of Borrelia hermsii (strain HS1 / DAH).